A 551-amino-acid polypeptide reads, in one-letter code: Chloride channel CLIC-like protein 1 (551 aa).

Positions 1–18 (MLCSLLLCECLLLVAGYA) are cleaved as a signal peptide. At 19-184 (HDDDWIDPTD…EDSFGVDPYN (166 aa)) the chain is on the lumenal side. A helical membrane pass occupies residues 185–205 (VLMVLLCLLCIVVLVATELWT). Residues 206-216 (YVRWYTQLRRV) are Cytoplasmic-facing. A helical membrane pass occupies residues 217-237 (LIISFLFSLGWNWMYLYKLAF). Residues 238–329 (AQHQAEVAKM…GEFIKALMKE (92 aa)) are Lumenal-facing. A helical membrane pass occupies residues 330–350 (IPALLHLPVLIIMALAILSFC). At 351–551 (YGAGKSVHVL…GQDPVSSPCG (201 aa)) the chain is on the cytoplasmic side. The disordered stretch occupies residues 363 to 415 (IGGPESEPPQALRPRDRRRQEEIDYRPDGGAGDADFHYRGQMGPTEQGPYAKT). Residues 380–389 (RRQEEIDYRP) show a composition bias toward basic and acidic residues. 2 positions are modified to phosphoserine: Ser438 and Ser464. Positions 447-551 (VPDAEAREHP…GQDPVSSPCG (105 aa)) are disordered. Thr482 bears the Phosphothreonine mark. Residues 488–508 (TESSQSAKPVSGQDTSGNTEG) show a composition bias toward polar residues. Phosphoserine is present on residues Ser509, Ser524, and Ser532.

It belongs to the chloride channel MCLC family. Homomultimers. Interacts with mitochondrial protein PIGBOS1 (via C-terminus); the interaction occurs at the mitochondria-associated endoplasmic reticulum (ER) membrane, a zone of contact between the ER and mitochondrial membranes, but does not appear to play a role in ER-mitochondria tethering and is not affected by ER stress. Interacts with CALR. In terms of tissue distribution, expressed in the retina of the eye, with extensive expression in the lamina cribrosa, optic nerve, ganglion cell layer, inner nuclear layer, outer nuclear layer and retinal pigment epithelium.

The protein localises to the endoplasmic reticulum membrane. It catalyses the reaction chloride(in) = chloride(out). The catalysed reaction is bromide(in) = bromide(out). It carries out the reaction nitrate(in) = nitrate(out). The enzyme catalyses fluoride(in) = fluoride(out). With respect to regulation, inhibited by ER lumenal Ca(2+). Anion-selective channel with Ca(2+)-dependent and voltage-independent gating. Permeable to small monovalent anions with selectivity for bromide &gt; chloride &gt; nitrate &gt; fluoride. Operates in the endoplasmic reticulum (ER) membrane where it mediates chloride efflux to compensate for the loss of positive charges from the ER lumen upon Ca(2+) release. Contributes to the maintenance of ER Ca(2+) pools and activation of unfolded protein response to prevent accumulation of misfolded proteins in the ER lumen. Particularly involved in ER homeostasis mechanisms underlying motor neurons and retinal photoreceptors survival. This is Chloride channel CLIC-like protein 1 from Homo sapiens (Human).